Reading from the N-terminus, the 309-residue chain is Ribonuclease Z (309 aa).

Residues His63, His65, Asp67, His68, His145, Asp216, and His274 each contribute to the Zn(2+) site. Asp67 functions as the Proton acceptor in the catalytic mechanism.

The protein belongs to the RNase Z family. In terms of assembly, homodimer. Zn(2+) serves as cofactor.

It carries out the reaction Endonucleolytic cleavage of RNA, removing extra 3' nucleotides from tRNA precursor, generating 3' termini of tRNAs. A 3'-hydroxy group is left at the tRNA terminus and a 5'-phosphoryl group is left at the trailer molecule.. Its function is as follows. Zinc phosphodiesterase, which displays some tRNA 3'-processing endonuclease activity. Probably involved in tRNA maturation, by removing a 3'-trailer from precursor tRNA. This is Ribonuclease Z from Streptococcus suis (strain 98HAH33).